The primary structure comprises 804 residues: Ribonucleoside-diphosphate reductase large subunit-like protein (804 aa).

The protein belongs to the ribonucleoside diphosphate reductase large chain family. In terms of assembly, the genome of human herpesvirus-6 does not code for a ribonucleotide reductase small subunit.

The protein localises to the virion. It localises to the host cytoplasm. Functionally, does not possess a ribonucleotide reductase activity. Betaherpesviruses probably use another strategy to expand the dNTP pool in a quiescent host cell. This Human herpesvirus 6B (strain Z29) (HHV-6 variant B) protein is Ribonucleoside-diphosphate reductase large subunit-like protein.